A 332-amino-acid polypeptide reads, in one-letter code: Holliday junction branch migration complex subunit RuvB (332 aa).

The tract at residues 1–181 (MARILDNNVM…FGITGHMEYY (181 aa)) is large ATPase domain (RuvB-L). ATP contacts are provided by residues Leu-20, Arg-21, Gly-62, Lys-65, Thr-66, Thr-67, 128–130 (EDF), Arg-171, Tyr-181, and Arg-218. Position 66 (Thr-66) interacts with Mg(2+). The small ATPAse domain (RuvB-S) stretch occupies residues 182–252 (QEKDLTEIVE…ITDRALTMLD (71 aa)). Positions 255 to 332 (REGLNYIDQK…RHLGYPYQNT (78 aa)) are head domain (RuvB-H). Positions 291, 310, 312, and 315 each coordinate DNA.

The protein belongs to the RuvB family. As to quaternary structure, homohexamer. Forms an RuvA(8)-RuvB(12)-Holliday junction (HJ) complex. HJ DNA is sandwiched between 2 RuvA tetramers; dsDNA enters through RuvA and exits via RuvB. An RuvB hexamer assembles on each DNA strand where it exits the tetramer. Each RuvB hexamer is contacted by two RuvA subunits (via domain III) on 2 adjacent RuvB subunits; this complex drives branch migration. In the full resolvosome a probable DNA-RuvA(4)-RuvB(12)-RuvC(2) complex forms which resolves the HJ.

Its subcellular location is the cytoplasm. The enzyme catalyses ATP + H2O = ADP + phosphate + H(+). Its function is as follows. The RuvA-RuvB-RuvC complex processes Holliday junction (HJ) DNA during genetic recombination and DNA repair, while the RuvA-RuvB complex plays an important role in the rescue of blocked DNA replication forks via replication fork reversal (RFR). RuvA specifically binds to HJ cruciform DNA, conferring on it an open structure. The RuvB hexamer acts as an ATP-dependent pump, pulling dsDNA into and through the RuvAB complex. RuvB forms 2 homohexamers on either side of HJ DNA bound by 1 or 2 RuvA tetramers; 4 subunits per hexamer contact DNA at a time. Coordinated motions by a converter formed by DNA-disengaged RuvB subunits stimulates ATP hydrolysis and nucleotide exchange. Immobilization of the converter enables RuvB to convert the ATP-contained energy into a lever motion, pulling 2 nucleotides of DNA out of the RuvA tetramer per ATP hydrolyzed, thus driving DNA branch migration. The RuvB motors rotate together with the DNA substrate, which together with the progressing nucleotide cycle form the mechanistic basis for DNA recombination by continuous HJ branch migration. Branch migration allows RuvC to scan DNA until it finds its consensus sequence, where it cleaves and resolves cruciform DNA. This Streptococcus pyogenes serotype M18 (strain MGAS8232) protein is Holliday junction branch migration complex subunit RuvB.